The sequence spans 333 residues: 1,5-anhydro-D-fructose reductase (333 aa).

Residues 9–12 (ASTI), 33–34 (SS), R38, 71–76 (TTNELH), 93–94 (EK), N120, 162–163 (WR), and Y283 each bind NADP(+).

The protein belongs to the Gfo/Idh/MocA family. In terms of assembly, monomer.

It catalyses the reaction 1,5-anhydro-D-mannitol + NADP(+) = 1,5-anhydro-D-fructose + NADPH + H(+). Catalyzes the NADPH-specific reduction of 1,5-anhydro-D-fructose to 1,5-anhydro-D-mannitol. In Rhizobium meliloti (strain 1021) (Ensifer meliloti), this protein is 1,5-anhydro-D-fructose reductase (afr).